The primary structure comprises 228 residues: ATP-dependent dethiobiotin synthetase BioD (228 aa).

12–17 (DVGKTY) provides a ligand contact to ATP. T16 serves as a coordination point for Mg(2+). K37 is a catalytic residue. ATP contacts are provided by residues D53, 114–117 (EGMG), 174–175 (ND), 203–205 (PFI), and N210. Mg(2+)-binding residues include D53 and E114.

This sequence belongs to the dethiobiotin synthetase family. Homodimer. Requires Mg(2+) as cofactor.

Its subcellular location is the cytoplasm. It catalyses the reaction (7R,8S)-7,8-diammoniononanoate + CO2 + ATP = (4R,5S)-dethiobiotin + ADP + phosphate + 3 H(+). It functions in the pathway cofactor biosynthesis; biotin biosynthesis; biotin from 7,8-diaminononanoate: step 1/2. Catalyzes a mechanistically unusual reaction, the ATP-dependent insertion of CO2 between the N7 and N8 nitrogen atoms of 7,8-diaminopelargonic acid (DAPA, also called 7,8-diammoniononanoate) to form a ureido ring. This is ATP-dependent dethiobiotin synthetase BioD from Nitrosopumilus maritimus (strain SCM1).